The primary structure comprises 235 residues: MLDRDGFRPNVGIILLNQRSQVFWGKRIRTHSWQFPQGGIDRGENPEQAMFRELHEEVGLHPQHVQVLARTRDWLRYEVPDRFIRRDARGHYKGQKQIWFLLQLVGHDWDLNLRATNHPEFDAWRWNDYWVPLDVVVEFKRGVYEMALTELSRFVPRCEFRFDARPEQRNRYLRGGLHQRDLLANQSGEPGSFPAAGGIPSYATRPGAPFELPPGATFEPDPQTSFGVNAPTKKT.

The region spanning 6-149 (GFRPNVGIIL…KRGVYEMALT (144 aa)) is the Nudix hydrolase domain. A Nudix box motif is present at residues 38–59 (GGIDRGENPEQAMFRELHEEVG). The disordered stretch occupies residues 184–235 (ANQSGEPGSFPAAGGIPSYATRPGAPFELPPGATFEPDPQTSFGVNAPTKKT).

Belongs to the Nudix hydrolase family. RppH subfamily. A divalent metal cation is required as a cofactor.

Accelerates the degradation of transcripts by removing pyrophosphate from the 5'-end of triphosphorylated RNA, leading to a more labile monophosphorylated state that can stimulate subsequent ribonuclease cleavage. This Polaromonas naphthalenivorans (strain CJ2) protein is RNA pyrophosphohydrolase.